We begin with the raw amino-acid sequence, 433 residues long: Homoserine O-acetyltransferase (433 aa).

In terms of domain architecture, AB hydrolase-1 spans 41 to 385 (NVVLVCHALT…HGHDAFLVEP (345 aa)). The interval 55–74 (VARSPAPERNEGTRGAGQAG) is disordered. Serine 166 functions as the Nucleophile in the catalytic mechanism. Arginine 237 is a binding site for substrate. Catalysis depends on residues aspartate 345 and histidine 378. Aspartate 379 is a binding site for substrate. The disordered stretch occupies residues 403–433 (RAVSDDGGGGGNDSARPERDHAPVHASLFKG).

This sequence belongs to the AB hydrolase superfamily. MetX family. In terms of assembly, homodimer.

It localises to the cytoplasm. It catalyses the reaction L-homoserine + acetyl-CoA = O-acetyl-L-homoserine + CoA. The protein operates within amino-acid biosynthesis; L-methionine biosynthesis via de novo pathway; O-acetyl-L-homoserine from L-homoserine: step 1/1. Transfers an acetyl group from acetyl-CoA to L-homoserine, forming acetyl-L-homoserine. This Halorubrum lacusprofundi (strain ATCC 49239 / DSM 5036 / JCM 8891 / ACAM 34) protein is Homoserine O-acetyltransferase.